A 78-amino-acid polypeptide reads, in one-letter code: UPF0270 protein PC1_3850 (78 aa).

Belongs to the UPF0270 family.

The protein is UPF0270 protein PC1_3850 of Pectobacterium carotovorum subsp. carotovorum (strain PC1).